Reading from the N-terminus, the 840-residue chain is Radial spoke head 10 homolog B (840 aa).

2 stretches are compositionally biased toward basic and acidic residues: residues 1 to 16 (MVKE…DKSA) and 51 to 63 (QPKD…EVKS). A disordered region spans residues 1–74 (MVKEKKKADK…SLPNEDTTQY (74 aa)). 10 MORN repeats span residues 86 to 108 (SYEG…QGGC), 109 to 131 (TYQG…ADGL), 132 to 154 (KYEG…PDGS), 155 to 177 (TYEG…STQP), 179 to 201 (SYIG…NQEG), 204 to 226 (WYEG…KSGN), 227 to 249 (IYEG…LTTN), 251 to 273 (EYTG…FLKR), 284 to 306 (EYVG…ASGA), and 307 to 329 (MYEG…KNGR). Residues 758 to 801 (KEKVKENRLHNEAMALQRKMENEELEARLNSLREEEAKRQDYEV) are a coiled coil. Residues 810-840 (VDAPSSSFTPSPPKEDTVVSSKSITSKKKKK) form a disordered region.

Interacts with RSPH6A. Does not appear to be part of the axonemal radial spoke complexes 1 or 2.

Its subcellular location is the cytoplasm. It localises to the cytoskeleton. The protein resides in the cilium axoneme. The protein localises to the cell projection. It is found in the cilium. Its subcellular location is the flagellum. Its function is as follows. May function as part of the axonemal radial spoke complex 3 (RS3). Radial spoke complexes are important for ciliary motility. The polypeptide is Radial spoke head 10 homolog B (RSPH10B) (Bos taurus (Bovine)).